The sequence spans 422 residues: Proline--tRNA ligase (422 aa).

Belongs to the class-II aminoacyl-tRNA synthetase family. ProS type 2 subfamily. Homodimer.

The protein resides in the cytoplasm. The enzyme catalyses tRNA(Pro) + L-proline + ATP = L-prolyl-tRNA(Pro) + AMP + diphosphate. Functionally, catalyzes the attachment of proline to tRNA(Pro) in a two-step reaction: proline is first activated by ATP to form Pro-AMP and then transferred to the acceptor end of tRNA(Pro). In Wolbachia sp. subsp. Drosophila simulans (strain wRi), this protein is Proline--tRNA ligase.